The following is a 427-amino-acid chain: Enolase (427 aa).

Gln163 is a (2R)-2-phosphoglycerate binding site. The active-site Proton donor is the Glu205. The Mg(2+) site is built by Asp242, Glu285, and Asp312. Residues Lys337, Arg366, Ser367, and Lys388 each coordinate (2R)-2-phosphoglycerate. The Proton acceptor role is filled by Lys337.

Belongs to the enolase family. It depends on Mg(2+) as a cofactor.

Its subcellular location is the cytoplasm. The protein localises to the secreted. It localises to the cell surface. It catalyses the reaction (2R)-2-phosphoglycerate = phosphoenolpyruvate + H2O. It functions in the pathway carbohydrate degradation; glycolysis; pyruvate from D-glyceraldehyde 3-phosphate: step 4/5. Its function is as follows. Catalyzes the reversible conversion of 2-phosphoglycerate (2-PG) into phosphoenolpyruvate (PEP). It is essential for the degradation of carbohydrates via glycolysis. The sequence is that of Enolase from Laribacter hongkongensis (strain HLHK9).